The sequence spans 190 residues: dTTP/UTP pyrophosphatase (190 aa).

Asp68 functions as the Proton acceptor in the catalytic mechanism.

It belongs to the Maf family. YhdE subfamily. Requires a divalent metal cation as cofactor.

The protein localises to the cytoplasm. It carries out the reaction dTTP + H2O = dTMP + diphosphate + H(+). The enzyme catalyses UTP + H2O = UMP + diphosphate + H(+). Nucleoside triphosphate pyrophosphatase that hydrolyzes dTTP and UTP. May have a dual role in cell division arrest and in preventing the incorporation of modified nucleotides into cellular nucleic acids. This chain is dTTP/UTP pyrophosphatase, found in Acholeplasma laidlawii (strain PG-8A).